A 39-amino-acid polypeptide reads, in one-letter code: Photosystem II reaction center protein L (39 aa).

A helical transmembrane segment spans residues 18–38 (SLYLGLLLVAVLGILFSSYFF).

The protein belongs to the PsbL family. In terms of assembly, PSII is composed of 1 copy each of membrane proteins PsbA, PsbB, PsbC, PsbD, PsbE, PsbF, PsbH, PsbI, PsbJ, PsbK, PsbL, PsbM, PsbT, PsbX, PsbY, PsbZ, Psb30/Ycf12, peripheral proteins PsbO, CyanoQ (PsbQ), PsbU, PsbV and a large number of cofactors. It forms dimeric complexes.

Its subcellular location is the cellular thylakoid membrane. One of the components of the core complex of photosystem II (PSII). PSII is a light-driven water:plastoquinone oxidoreductase that uses light energy to abstract electrons from H(2)O, generating O(2) and a proton gradient subsequently used for ATP formation. It consists of a core antenna complex that captures photons, and an electron transfer chain that converts photonic excitation into a charge separation. This subunit is found at the monomer-monomer interface and is required for correct PSII assembly and/or dimerization. The chain is Photosystem II reaction center protein L from Microcystis aeruginosa (strain NIES-843 / IAM M-2473).